Consider the following 454-residue polypeptide: V-type ATP synthase subunit I 2 (454 aa).

The tract at residues 101-121 is disordered; it reads EREGDAPSVPRGKSSVAHDSA. Helical transmembrane passes span 254 to 274, 293 to 313, 351 to 371, and 424 to 444; these read LLFGIMFGDLGQGLLFFVLGL, VFLSVGFSSMVMGFLTGEFFA, MAFFGFTLFLGFVINSLGLII, and ACLSWVFFVKSFWSVCASVCV.

Belongs to the V-ATPase 116 kDa subunit family.

The protein localises to the cell membrane. In terms of biological role, produces ATP from ADP in the presence of a proton gradient across the membrane. The polypeptide is V-type ATP synthase subunit I 2 (atpI2) (Treponema pallidum (strain Nichols)).